The primary structure comprises 334 residues: D-fructose 1,6-bisphosphatase class 2/sedoheptulose 1,7-bisphosphatase (334 aa).

4 residues coordinate Mn(2+): D33, E57, D85, and E88. Substrate is bound by residues 88 to 90 (EGT), Y119, 164 to 166 (RAR), and 186 to 188 (DGD). E213 contacts Mn(2+).

Belongs to the FBPase class 2 family. Homotetramer. It depends on Mn(2+) as a cofactor.

It catalyses the reaction beta-D-fructose 1,6-bisphosphate + H2O = beta-D-fructose 6-phosphate + phosphate. The catalysed reaction is D-sedoheptulose 1,7-bisphosphate + H2O = D-sedoheptulose 7-phosphate + phosphate. Its pathway is carbohydrate biosynthesis; Calvin cycle. Catalyzes the hydrolysis of fructose 1,6-bisphosphate (Fru 1,6-P2) and sedoheptulose 1,7-bisphosphate (Sed 1,7-P2) to fructose 6-phosphate and sedoheptulose 7-phosphate, respectively. This chain is D-fructose 1,6-bisphosphatase class 2/sedoheptulose 1,7-bisphosphatase, found in Parasynechococcus marenigrum (strain WH8102).